Consider the following 436-residue polypeptide: Testican-3 (436 aa).

The N-terminal stretch at 1-22 is a signal peptide; the sequence is MLKVSALLCVCAAAWCSQTLAA. Intrachain disulfides connect Cys90/Cys101, Cys95/Cys111, Cys139/Cys169, Cys142/Cys162, Cys151/Cys183, Cys317/Cys341, Cys352/Cys359, and Cys361/Cys380. One can recognise a Kazal-like domain in the interval 133–185; the sequence is GLPSSTCKPCPIAYASPVCGSDGHSYSSQCKLEYQACVLGKQISIKCEGRCPC. Residues 314–380 form the Thyroglobulin type-1 domain; it reads DPPCHTELSN…GSRINGVADC (67 aa). 2 O-linked (Xyl...) (glycosaminoglycan) serine glycosylation sites follow: Ser387 and Ser392. Residues 393–436 form a disordered region; sequence GDFREWTDDEGEEDDIMNDKDDIEDDDEDEGDDDDDGDVHDGYI. Residues 399-430 are compositionally biased toward acidic residues; that stretch reads TDDEGEEDDIMNDKDDIEDDDEDEGDDDDDGD.

In terms of processing, contains chondroitin sulfate and heparan sulfate O-linked oligosaccharides. In terms of tissue distribution, expressed in brain.

It localises to the secreted. The protein resides in the extracellular space. Its subcellular location is the extracellular matrix. May participate in diverse steps of neurogenesis. Inhibits the processing of pro-matrix metalloproteinase 2 (MMP-2) by MT1-MMP and MT3-MMP. May interfere with tumor invasion. The protein is Testican-3 (Spock3) of Mus musculus (Mouse).